The following is an 857-amino-acid chain: Bifunctional levopimaradiene synthase, chloroplastic (857 aa).

The N-terminal 33 residues, Met1–Ser33, are a transit peptide targeting the chloroplast. Lys257 contributes to the substrate binding site. Mg(2+)-binding residues include Asp390 and Asp392. The DXDD motif signature appears at Asp390–Asp393. Substrate is bound at residue Lys477. Mg(2+) is bound by residues Asp609, Asp613, Asn753, Thr757, and Glu761. The DDXXD motif motif lies at Asp609–Asp613.

Belongs to the terpene synthase family. Tpsd subfamily. Requires Mg(2+) as cofactor.

It is found in the plastid. The protein resides in the chloroplast. It carries out the reaction (2E,6E,10E)-geranylgeranyl diphosphate = (+)-copalyl diphosphate. The enzyme catalyses (+)-copalyl diphosphate = abieta-7,13-diene + diphosphate. It catalyses the reaction (+)-copalyl diphosphate = abieta-8(14),12-diene + diphosphate. The catalysed reaction is (+)-copalyl diphosphate = neoabietadiene + diphosphate. It participates in terpene metabolism; oleoresin biosynthesis. In terms of biological role, involved in defensive oleoresin formation in conifers in response to insect attack or other injury. Involved in diterpene (C20) olefins biosynthesis. Bifunctional enzyme that catalyzes two sequential cyclizations of geranylgeranyl diphosphate (GGPP) to levopimaradiene. Levopimaradiene is the major products of the enzyme with abietadiene and neoabietadiene. No activity with farnesyl diphosphate (FPP) as substrate. This Pinus contorta (Shore pine) protein is Bifunctional levopimaradiene synthase, chloroplastic.